Reading from the N-terminus, the 264-residue chain is 3-methyl-2-oxobutanoate hydroxymethyltransferase (264 aa).

D45 and D84 together coordinate Mg(2+). 3-methyl-2-oxobutanoate contacts are provided by residues 45–46 (DS), D84, and K112. Position 114 (E114) interacts with Mg(2+). The Proton acceptor role is filled by E181.

It belongs to the PanB family. In terms of assembly, homodecamer; pentamer of dimers. Mg(2+) is required as a cofactor.

It is found in the cytoplasm. The catalysed reaction is 3-methyl-2-oxobutanoate + (6R)-5,10-methylene-5,6,7,8-tetrahydrofolate + H2O = 2-dehydropantoate + (6S)-5,6,7,8-tetrahydrofolate. The protein operates within cofactor biosynthesis; (R)-pantothenate biosynthesis; (R)-pantoate from 3-methyl-2-oxobutanoate: step 1/2. Catalyzes the reversible reaction in which hydroxymethyl group from 5,10-methylenetetrahydrofolate is transferred onto alpha-ketoisovalerate to form ketopantoate. This is 3-methyl-2-oxobutanoate hydroxymethyltransferase from Escherichia coli O81 (strain ED1a).